The chain runs to 170 residues: Chorion protein S18 (170 aa).

The first 17 residues, 1-17 (MMKFMCIFVCAIAAVSA), serve as a signal peptide directing secretion. Low complexity predominate over residues 146-159 (AAAASSSVAGQHSG). Positions 146-170 (AAAASSSVAGQHSGYKNSGYKNSSY) are disordered. Polar residues predominate over residues 160–170 (YKNSGYKNSSY).

It belongs to the chorion protein S15/S18 family.

Its subcellular location is the secreted. In terms of biological role, chorion membrane (egg shell) protein; plays a role in protecting the egg from the environment. This is Chorion protein S18 (Cp18) from Drosophila virilis (Fruit fly).